Reading from the N-terminus, the 548-residue chain is Esterase-5A (548 aa).

The N-terminal stretch at M1–G21 is a signal peptide. C87 and C106 are joined by a disulfide. N95 and N116 each carry an N-linked (GlcNAc...) asparagine glycan. Catalysis depends on S210, which acts as the Acyl-ester intermediate. The cysteines at positions 262 and 274 are disulfide-linked. An N-linked (GlcNAc...) asparagine glycan is attached at N479. A disulfide bond links C518 and C539.

It belongs to the type-B carboxylesterase/lipase family.

Its subcellular location is the secreted. It catalyses the reaction a carboxylic ester + H2O = an alcohol + a carboxylate + H(+). The polypeptide is Esterase-5A (Est-5A) (Drosophila pseudoobscura pseudoobscura (Fruit fly)).